Reading from the N-terminus, the 59-residue chain is U-limacoditoxin(3)-Dv33 (59 aa).

A signal peptide spans 1–19 (MSKVILLCLIFALFACSIS).

This sequence belongs to the limacoditoxin-3 family. Post-translationally, the natural peptide is not amidated. The recombinant peptide is amidated. As to expression, expressed by the venom secretory cell of the spine. The spine is a cuticular structure containing a single large nucleated venom-secreting cell at its base. It is an independent unit capable of producing, storing and injecting venom. On the back of D.vulnerans caterpillars, spines are grouped together by 50 to 100 to form scoli, of which there are eight in D.vulnerans.

It is found in the secreted. Its function is as follows. Probable toxin. Shows a relatively potent antiparasitic activity against the major pathogenic nematode of ruminants (H.contortus, EC(50)=2.6 uM). Does not show insecticidal and antimicrobial activities. Does not induce increase in intracellular calcium in mouse DRG neurons, suggesting that it does not induce pain. The polypeptide is U-limacoditoxin(3)-Dv33 (Doratifera vulnerans (Mottled cup moth)).